Reading from the N-terminus, the 190-residue chain is Segregation and condensation protein B (190 aa).

Belongs to the ScpB family. As to quaternary structure, homodimer. Homodimerization may be required to stabilize the binding of ScpA to the Smc head domains. Component of a cohesin-like complex composed of ScpA, ScpB and the Smc homodimer, in which ScpA and ScpB bind to the head domain of Smc. The presence of the three proteins is required for the association of the complex with DNA.

It is found in the cytoplasm. Its function is as follows. Participates in chromosomal partition during cell division. May act via the formation of a condensin-like complex containing Smc and ScpA that pull DNA away from mid-cell into both cell halves. In Bacillus cereus (strain B4264), this protein is Segregation and condensation protein B.